Here is a 457-residue protein sequence, read N- to C-terminus: Subtilisin-like serine protease Pen c 2 (457 aa).

An N-terminal signal peptide occupies residues 1 to 16 (MKGFLGLALLPLLTAA). Residues 17-136 (SPVSVESIHN…IEKDSEVHHF (120 aa)) constitute a propeptide, removed in mature form. The region spanning 43–134 (SYIVVFKKHV…DYIEKDSEVH (92 aa)) is the Inhibitor I9 domain. One can recognise a Peptidase S8 domain in the interval 146–457 (PWGLARISHR…YTDIVAQGGY (312 aa)). Residues Asp-182 and His-214 each act as charge relay system in the active site. Asn-244 and Asn-284 each carry an N-linked (GlcNAc...) asparagine glycan. Ser-380 functions as the Charge relay system in the catalytic mechanism. N-linked (GlcNAc...) asparagine glycosylation occurs at Asn-447.

It belongs to the peptidase S8 family.

Its function is as follows. Serine protease. This is Subtilisin-like serine protease Pen c 2 from Penicillium citrinum.